Reading from the N-terminus, the 98-residue chain is Protein translation factor SUI1 homolog (98 aa).

Belongs to the SUI1 family.

This chain is Protein translation factor SUI1 homolog, found in Thermococcus onnurineus (strain NA1).